Here is a 253-residue protein sequence, read N- to C-terminus: MPAVWPPRTVIRKSSGLRTLESALYRAGLGPVAGVDEVGRGACAGPLVVAACILGPNRLESLSALDDSKKLNESERERLFPLIRRYAVAFHVVFIPSVEVDRRGVHVANIEGMRRAVAGLAVRPGYVLSDGFRVPGLPMPSLPVVGGDAAAACIAAASVLAKVSRDRLMVAMDQEHPGYGFADHKGYSTRAHSAALNDLGPSTQHRFSFINVRRLVVDGEPGQGGELECGKLAVDVPVDMPVDRVLREGQLSR.

One can recognise an RNase H type-2 domain in the interval 30 to 221 (GPVAGVDEVG…VRRLVVDGEP (192 aa)). Residues D36, E37, and D130 each coordinate a divalent metal cation.

This sequence belongs to the RNase HII family. Mn(2+) is required as a cofactor. Mg(2+) serves as cofactor.

It is found in the cytoplasm. The enzyme catalyses Endonucleolytic cleavage to 5'-phosphomonoester.. In terms of biological role, endonuclease that specifically degrades the RNA of RNA-DNA hybrids. In Mycolicibacterium gilvum (strain PYR-GCK) (Mycobacterium gilvum (strain PYR-GCK)), this protein is Ribonuclease HII.